We begin with the raw amino-acid sequence, 159 residues long: Transcriptional repressor NrdR (159 aa).

Residues 3-34 (CPTCQNTDSRVLESRSADTGKSVRRRRECLNC) fold into a zinc finger. An ATP-cone domain is found at 49-139 (ISVIKKDGSR…VYRKFNGVKD (91 aa)).

Belongs to the NrdR family. Requires Zn(2+) as cofactor.

Its function is as follows. Negatively regulates transcription of bacterial ribonucleotide reductase nrd genes and operons by binding to NrdR-boxes. The sequence is that of Transcriptional repressor NrdR from Prochlorococcus marinus subsp. pastoris (strain CCMP1986 / NIES-2087 / MED4).